The following is a 142-amino-acid chain: Histone H2B (142 aa).

The segment covering 1–10 (MPPKPAEKKP) has biased composition (basic and acidic residues). The segment at 1–50 (MPPKPAEKKPSSTAGKAPASSAGKAPAEAAKKTSKAPAKSGEKKKATKVR) is disordered. 2 positions are modified to N6-acetyllysine; alternate: lysine 8 and lysine 9. Residues lysine 8 and lysine 9 each participate in a glycyl lysine isopeptide (Lys-Gly) (interchain with G-Cter in SUMO); alternate cross-link. Residues 11–28 (SSTAGKAPASSAGKAPAE) are compositionally biased toward low complexity. An N6-acetyllysine modification is found at lysine 24. Residues 40 to 50 (SGEKKKATKVR) show a composition bias toward basic and acidic residues. Residue lysine 137 forms a Glycyl lysine isopeptide (Lys-Gly) (interchain with G-Cter in ubiquitin) linkage.

This sequence belongs to the histone H2B family. The nucleosome is a histone octamer containing two molecules each of H2A, H2B, H3 and H4 assembled in one H3-H4 heterotetramer and two H2A-H2B heterodimers. The octamer wraps approximately 147 bp of DNA. Monoubiquitinated by the UBC2-BRE1 complex to form H2BK123ub1. H2BK123ub1 gives a specific tag for epigenetic transcriptional activation and is also prerequisite for H3K4me and H3K79me formation. H2BK123ub1 also modulates the formation of double-strand breaks during meiosis and is a prerequisite for DNA-damage checkpoint activation. In terms of processing, acetylation of N-terminal lysines and particularly formation of H2BK11ac has a positive effect on transcription. Post-translationally, sumoylation to form H2BK6su or H2BK7su occurs preferentially near the telomeres and represses gene transcription.

It is found in the nucleus. The protein localises to the chromosome. Core component of nucleosome. Nucleosomes wrap and compact DNA into chromatin, limiting DNA accessibility to the cellular machineries which require DNA as a template. Histones thereby play a central role in transcription regulation, DNA repair, DNA replication and chromosomal stability. DNA accessibility is regulated via a complex set of post-translational modifications of histones, also called histone code, and nucleosome remodeling. This chain is Histone H2B (HTB1), found in Mycosarcoma maydis (Corn smut fungus).